A 448-amino-acid chain; its full sequence is MSLAVVFLLGFLAVSHGQQAGTETEEYHLPLTWERDGSSVSASVVIDSNWRWTHSTEDTTNCYDGNEWDSTLCPDADTCTENCAIDGVDQGTWGDTYGITASGSKLTLSFVTEGEYSTDIGSRVFLMADDDNYEIFNLLDKEFSFDVDASNLPCGLNGALYFVSMDEDGGTSKYSTNTAGAKYGTGYCDAQCPHDMKFIAGKANSDGWTPSDNDQNAGTGEMGACCHEMDIWEANSQAQSYTAHVCSVDGYTPCTGTDCGDNGDDRYKGVCDKDGCDYAAYRLGQHDFYGEGGTVDSGSTLTVITQFITGGGGLNEIRRIYQQGGQTIQNAAVNFPGDVDPYDSITEDFCVDIKRYFGDTNDFDAKGGMSGMSNALKKGMVLVMSLWDDHYANMLWLDATYPVDSTEPGALRGPCSTDSGDPADVEANFPGSTVTFSNIKIGPIQSYD.

The N-terminal stretch at 1–17 (MSLAVVFLLGFLAVSHG) is a signal peptide. Gln-18 carries the post-translational modification Pyrrolidone carboxylic acid. 2 cysteine pairs are disulfide-bonded: Cys-62/Cys-83 and Cys-73/Cys-79. Substrate-binding positions include Tyr-97, 119–120 (DI), and Lys-197. Cystine bridges form between Cys-154–Cys-415, Cys-188–Cys-226, Cys-192–Cys-225, Cys-246–Cys-271, Cys-254–Cys-259, and Cys-276–Cys-350. Catalysis depends on Glu-228, which acts as the Nucleophile. Residues 230-233 (DIWE) and His-244 contribute to the substrate site. Catalysis depends on Glu-233, which acts as the Proton donor/acceptor. Substrate-binding residues include Arg-266 and Asp-274. Residues Trp-396 and Arg-412 each coordinate substrate.

It belongs to the glycosyl hydrolase 7 (cellulase C) family. In terms of assembly, monomer. As to expression, highly expressed in the hepatopancreas (at protein level). Little or no expression detected in the hindgut or the rest of the body (at protein level).

It is found in the secreted. It carries out the reaction Hydrolysis of (1-&gt;4)-beta-D-glucosidic linkages in cellulose and cellotetraose, releasing cellobiose from the non-reducing ends of the chains.. In terms of biological role, exocellobiohydrolase (CBH) that catalyzes the hydrolysis of 1,4-beta-D-glucosidic bonds in cellulose to release the disaccharide cellobiose. The degradation of cellulose involves an interplay between different cellulolytic enzymes. Hydrolysis starts with endoglucanases (EGs), which cut internal beta-1,4-glucosidic bonds in cellulose to reduce the polymerization degree of the substrate and create new chain ends for exocellobiohydrolases (CBHs). The CBHs release the disaccharide cellobiose from the non-reducing end of the cellulose polymer chain. Finally, beta-1,4-glucosidases hydrolyze the cellobiose and other short cello-oligosaccharides into glucose units. The polypeptide is Exoglucanase GH7B (Limnoria quadripunctata (Gribble)).